Reading from the N-terminus, the 122-residue chain is Large ribosomal subunit protein uL18 (122 aa).

The interval 1 to 25 (MSTLSRKQQTQKRHRRLRRHLSGTA) is disordered. Positions 9–21 (QTQKRHRRLRRHL) are enriched in basic residues.

Belongs to the universal ribosomal protein uL18 family. In terms of assembly, part of the 50S ribosomal subunit; part of the 5S rRNA/L5/L18/L25 subcomplex. Contacts the 5S and 23S rRNAs.

This is one of the proteins that bind and probably mediate the attachment of the 5S RNA into the large ribosomal subunit, where it forms part of the central protuberance. The sequence is that of Large ribosomal subunit protein uL18 from Synechococcus sp. (strain CC9311).